The following is a 491-amino-acid chain: Regulatory protein NPR5 (491 aa).

One can recognise a BTB domain in the interval 26–116 (SDVTFSVEGR…LYSGQVSIVP (91 aa)). The C2HC NPR-type zinc-finger motif lies at 122 to 136 (RPNCGERGCWHTHCS). 4 residues coordinate Zn(2+): Cys-125, Cys-130, His-132, and Cys-135. 4 ANK repeats span residues 254–283 (QKIR…LNLD), 284–313 (ESLA…DVNY), 318–347 (AGKT…DPNV), and 351–385 (GGIT…KLRL). A disordered region spans residues 400–491 (EEGNNSNNQN…MYHHHHQHHF (92 aa)). The segment covering 403–413 (NNSNNQNNDNN) has biased composition (low complexity). Residues 457–470 (DQGDDHNSQREGMS) are compositionally biased toward basic and acidic residues.

Belongs to the plant 'ANKYRIN-BTB/POZ' family. 'NOOT-BOP-COCH-like' (NBCL) subfamily. As to quaternary structure, homodimer or heterodimer with BOP1. Interacts with PAN. Highly expressed in young floral meristem. Predominantly expressed in the boundary between floral meristem (FM) and sepal primordia.

Its subcellular location is the cytoplasm. The protein localises to the nucleus. It functions in the pathway protein modification; protein ubiquitination. May act as a substrate-specific adapter of an E3 ubiquitin-protein ligase complex (CUL3-RBX1-BTB) which mediates the ubiquitination and subsequent proteasomal degradation of target proteins. Acts redundantly with BOP2. BOP1/2 promote leaf and floral meristem fate and determinacy in a pathway targeting AP1 and AGL24. BOP1/2 act as transcriptional co-regulators through direct interaction with TGA factors, including PAN, a direct regulator of AP1. Controls lateral organ fate through positive regulation of adaxial-abaxial polarity genes ATHB-14/PHB, YAB1/FIL and YAB3, and through positive regulation of LOB domain-containing genes LOB, LBD6/AS2 and LBD36. Promotes and maintains a developmentally determinate state in leaf cells through the negative regulation of JAG, JGL and class I KNOX genes. Is also involved in nectary development, formation of normal abscission zones (AZs) and suppression of bract formation, probably by regulating the cell wall disorganization. The polypeptide is Regulatory protein NPR5 (Arabidopsis thaliana (Mouse-ear cress)).